Here is a 310-residue protein sequence, read N- to C-terminus: Probable deoxyhypusine synthase (310 aa).

Lysine 284 acts as the Nucleophile in catalysis.

This sequence belongs to the deoxyhypusine synthase family. NAD(+) is required as a cofactor.

The catalysed reaction is [eIF5A protein]-L-lysine + spermidine = [eIF5A protein]-deoxyhypusine + propane-1,3-diamine. It functions in the pathway protein modification; eIF5A hypusination. Its function is as follows. Catalyzes the NAD-dependent oxidative cleavage of spermidine and the subsequent transfer of the butylamine moiety of spermidine to the epsilon-amino group of a specific lysine residue of the eIF-5A precursor protein to form the intermediate deoxyhypusine residue. The sequence is that of Probable deoxyhypusine synthase (dys) from Thermoplasma volcanium (strain ATCC 51530 / DSM 4299 / JCM 9571 / NBRC 15438 / GSS1).